The following is a 436-amino-acid chain: Serine--tRNA ligase (436 aa).

241–243 (TSE) serves as a coordination point for L-serine. Residue 272–274 (RAE) coordinates ATP. L-serine is bound at residue Glu-295. 359–362 (EISS) contributes to the ATP binding site. Ser-395 provides a ligand contact to L-serine.

Belongs to the class-II aminoacyl-tRNA synthetase family. Type-1 seryl-tRNA synthetase subfamily. In terms of assembly, homodimer. The tRNA molecule binds across the dimer.

It is found in the cytoplasm. It carries out the reaction tRNA(Ser) + L-serine + ATP = L-seryl-tRNA(Ser) + AMP + diphosphate + H(+). The catalysed reaction is tRNA(Sec) + L-serine + ATP = L-seryl-tRNA(Sec) + AMP + diphosphate + H(+). It participates in aminoacyl-tRNA biosynthesis; selenocysteinyl-tRNA(Sec) biosynthesis; L-seryl-tRNA(Sec) from L-serine and tRNA(Sec): step 1/1. Catalyzes the attachment of serine to tRNA(Ser). Is also able to aminoacylate tRNA(Sec) with serine, to form the misacylated tRNA L-seryl-tRNA(Sec), which will be further converted into selenocysteinyl-tRNA(Sec). This is Serine--tRNA ligase from Beijerinckia indica subsp. indica (strain ATCC 9039 / DSM 1715 / NCIMB 8712).